Consider the following 230-residue polypeptide: 5'-methylthioadenosine/S-adenosylhomocysteine nucleosidase (230 aa).

The Proton acceptor role is filled by glutamate 12. Substrate is bound by residues glycine 78, methionine 153, and 174–175 (ME). Aspartate 198 acts as the Proton donor in catalysis.

Belongs to the PNP/UDP phosphorylase family. MtnN subfamily.

It catalyses the reaction S-adenosyl-L-homocysteine + H2O = S-(5-deoxy-D-ribos-5-yl)-L-homocysteine + adenine. The catalysed reaction is S-methyl-5'-thioadenosine + H2O = 5-(methylsulfanyl)-D-ribose + adenine. It carries out the reaction 5'-deoxyadenosine + H2O = 5-deoxy-D-ribose + adenine. It participates in amino-acid biosynthesis; L-methionine biosynthesis via salvage pathway; S-methyl-5-thio-alpha-D-ribose 1-phosphate from S-methyl-5'-thioadenosine (hydrolase route): step 1/2. In terms of biological role, catalyzes the irreversible cleavage of the glycosidic bond in both 5'-methylthioadenosine (MTA) and S-adenosylhomocysteine (SAH/AdoHcy) to adenine and the corresponding thioribose, 5'-methylthioribose and S-ribosylhomocysteine, respectively. Also cleaves 5'-deoxyadenosine, a toxic by-product of radical S-adenosylmethionine (SAM) enzymes, into 5-deoxyribose and adenine. The chain is 5'-methylthioadenosine/S-adenosylhomocysteine nucleosidase from Aeromonas salmonicida (strain A449).